The chain runs to 157 residues: 2-C-methyl-D-erythritol 2,4-cyclodiphosphate synthase (157 aa).

Asp-9 and His-11 together coordinate a divalent metal cation. 4-CDP-2-C-methyl-D-erythritol 2-phosphate-binding positions include 9 to 11 (DVH) and 35 to 36 (HS). His-43 contacts a divalent metal cation. Residues 57–59 (DIG), 62–66 (FPDTD), 101–107 (AEKPKMA), 133–136 (TTTE), Phe-140, and Arg-143 each bind 4-CDP-2-C-methyl-D-erythritol 2-phosphate.

It belongs to the IspF family. Homotrimer. It depends on a divalent metal cation as a cofactor.

The catalysed reaction is 4-CDP-2-C-methyl-D-erythritol 2-phosphate = 2-C-methyl-D-erythritol 2,4-cyclic diphosphate + CMP. It functions in the pathway isoprenoid biosynthesis; isopentenyl diphosphate biosynthesis via DXP pathway; isopentenyl diphosphate from 1-deoxy-D-xylulose 5-phosphate: step 4/6. Functionally, involved in the biosynthesis of isopentenyl diphosphate (IPP) and dimethylallyl diphosphate (DMAPP), two major building blocks of isoprenoid compounds. Catalyzes the conversion of 4-diphosphocytidyl-2-C-methyl-D-erythritol 2-phosphate (CDP-ME2P) to 2-C-methyl-D-erythritol 2,4-cyclodiphosphate (ME-CPP) with a corresponding release of cytidine 5-monophosphate (CMP). The sequence is that of 2-C-methyl-D-erythritol 2,4-cyclodiphosphate synthase from Listeria monocytogenes serotype 4b (strain CLIP80459).